The chain runs to 566 residues: Urease subunit alpha (566 aa).

One can recognise a Urease domain in the interval 128-566; it reads GGVDTHIHFI…LPMAQRYFLF (439 aa). Residues histidine 133, histidine 135, and lysine 216 each contribute to the Ni(2+) site. Lysine 216 bears the N6-carboxylysine mark. Histidine 218 contacts substrate. Positions 245 and 271 each coordinate Ni(2+). Residue histidine 319 is the Proton donor of the active site. Aspartate 359 is a Ni(2+) binding site.

It belongs to the metallo-dependent hydrolases superfamily. Urease alpha subunit family. As to quaternary structure, may form a heterohexamer of 3 UreC (alpha) and 3 UreAB (gamma/beta) subunits. May also form a heterotrimer of UreA (gamma), UreB (beta) and UreC (alpha) subunits. Three heterotrimers associate to form the active enzyme. Ni cation serves as cofactor. Carboxylation allows a single lysine to coordinate two nickel ions.

It is found in the cytoplasm. It catalyses the reaction urea + 2 H2O + H(+) = hydrogencarbonate + 2 NH4(+). Its pathway is nitrogen metabolism; urea degradation; CO(2) and NH(3) from urea (urease route): step 1/1. This chain is Urease subunit alpha, found in Pseudomonas savastanoi pv. phaseolicola (strain 1448A / Race 6) (Pseudomonas syringae pv. phaseolicola (strain 1448A / Race 6)).